The primary structure comprises 184 residues: Inosine triphosphate pyrophosphatase (184 aa).

ITP is bound at residue 10–15; the sequence is TGNVKK. Residue E37 coordinates Mg(2+). Residues K49, 65 to 66, K82, 141 to 144, K164, and 169 to 170 each bind ITP; these read DT, FGWD, and HR.

This sequence belongs to the HAM1 NTPase family. Homodimer. The cofactor is Mg(2+). Requires Mn(2+) as cofactor.

The protein resides in the cytoplasm. The enzyme catalyses ITP + H2O = IMP + diphosphate + H(+). It carries out the reaction dITP + H2O = dIMP + diphosphate + H(+). The catalysed reaction is XTP + H2O = XMP + diphosphate + H(+). Pyrophosphatase that hydrolyzes non-canonical purine nucleotides such as inosine triphosphate (ITP), deoxyinosine triphosphate (dITP) or xanthosine 5'-triphosphate (XTP) to their respective monophosphate derivatives. The enzyme does not distinguish between the deoxy- and ribose forms. Probably excludes non-canonical purines from RNA and DNA precursor pools, thus preventing their incorporation into RNA and DNA and avoiding chromosomal lesions. The sequence is that of Inosine triphosphate pyrophosphatase from Caenorhabditis elegans.